Reading from the N-terminus, the 953-residue chain is TPR repeat-containing protein ZIP4 (953 aa).

The stretch at 129 to 162 is one TPR 1 repeat; the sequence is ASFFHRSGLAWLDLGRVDLASACFEKATPLVSAA. Residues 248 to 269 are disordered; sequence AASPSSSSPRTPPYGGATPKTP. 2 TPR repeats span residues 432 to 465 and 473 to 506; these read HALL…VSRD and ADCF…EPNI. Residues 924–953 are disordered; the sequence is RVSGDEPDECSQEEAPKASISGSMSQPVLV. The segment covering 943 to 953 has biased composition (polar residues); the sequence is ISGSMSQPVLV.

The protein resides in the nucleus. Its subcellular location is the chromosome. Required for crossover formation, complete synapsis of homologous chromosomes and bivalent formation during meiosis. Is specific to recombination events resulting in interference-sensitive crossovers (class I meiotic crossover) and works cooperatively with MER3 to promote crossovers. The sequence is that of TPR repeat-containing protein ZIP4 from Oryza sativa subsp. indica (Rice).